The following is a 1388-amino-acid chain: CRISPR-associated endonuclease Cas9 2 (1388 aa).

The active-site For RuvC-like nuclease domain is aspartate 10. Residues aspartate 10, glutamate 763, and glutamate 767 each contribute to the Mg(2+) site. Residues 771 to 928 (TNQGKSNSQQ…DKAGFIQRQL (158 aa)) enclose the HNH Cas9-type domain. The active-site Proton acceptor for HNH nuclease domain is the histidine 847. Histidine 990 is a Mg(2+) binding site. Over residues 1100 to 1109 (EQNHGLDRGK) the composition is skewed to basic and acidic residues. The interval 1100–1130 (EQNHGLDRGKPKGLFNANLSSKPKPNSNENL) is disordered. Residues 1102-1388 (NHGLDRGKPK…RIDLAKLGEG (287 aa)) form a PAM-interacting domain (PI) region. A compositionally biased stretch (polar residues) spans 1116–1129 (ANLSSKPKPNSNEN).

This sequence belongs to the CRISPR-associated protein Cas9 family. Subtype II-A subfamily. Monomer. Binds crRNA and tracrRNA. The cofactor is Mg(2+).

In terms of biological role, CRISPR (clustered regularly interspaced short palindromic repeat) is an adaptive immune system that provides protection against mobile genetic elements (viruses, transposable elements and conjugative plasmids). CRISPR clusters contain spacers, sequences complementary to antecedent mobile elements, and target invading nucleic acids. CRISPR clusters are transcribed and processed into CRISPR RNA (crRNA). In type II CRISPR systems correct processing of pre-crRNA requires a trans-encoded small RNA (tracrRNA), endogenous ribonuclease 3 (rnc) and this protein. The tracrRNA serves as a guide for ribonuclease 3-aided processing of pre-crRNA. Subsequently Cas9/crRNA/tracrRNA endonucleolytically cleaves linear or circular dsDNA target complementary to the spacer yielding blunt ends; Cas9 is inactive in the absence of the 2 guide RNAs (gRNA). Cas9 recognizes a 3'-G-rich protospacer adjacent motif (PAM, GGG in this organism) in the CRISPR repeat sequences to help distinguish self versus nonself, as targets within the bacterial CRISPR locus do not have PAMs. PAM recognition is also required for catalytic activity. Complements the gRNA coprocessing defect in a cas9 deletion in S.pyogenes strain 370, and cuts target DNA in Cas9:gRNAs mixing experiments with S.mutans strain UA159. The chain is CRISPR-associated endonuclease Cas9 2 from Streptococcus thermophilus (strain ATCC BAA-491 / LMD-9).